The sequence spans 1997 residues: Protein MOR1 (1997 aa).

HEAT repeat units lie at residues 48 to 86 (DARL…AADA) and 164 to 202 (VVPP…WIGK). Residues 236–264 (RKIRSEQEKELEEEVVPEAAGTNNSEEAV) form a disordered region. 3 HEAT repeats span residues 321-359 (PGDF…GLRT), 362-400 (SGNS…SGCI), and 441-479 (LKLH…MVGM). The tract at residues 501–576 (IGSASDTTSG…DGGPQSKASA (76 aa)) is disordered. Residues 504-520 (ASDTTSGTVAASNTGVG) are compositionally biased toward polar residues. Residues 529–539 (SSSMRRSAASM) show a composition bias toward low complexity. 4 HEAT repeats span residues 848-886 (EDIS…EAHK), 890-928 (PTGT…AMGP), 931-969 (EKSS…AAQL), and 1007-1045 (PSEA…ICGQ). The tract at residues 1087-1115 (MSLPSKAGSKNNKHGPNDRGSNVSKAVSQ) is disordered. HEAT repeat units lie at residues 1233 to 1259 (TTCL…MLTE), 1260 to 1294 (AEAA…MVNI), 1295 to 1332 (YSLP…HHGT), and 1334 to 1372 (VSGL…NLGD). Over residues 1400 to 1410 (MDKRREGRPGD) the composition is skewed to basic and acidic residues. The tract at residues 1400 to 1436 (MDKRREGRPGDARAALRRSVRENGSDIAEQSGEAVSR) is disordered. The stretch at 1539 to 1579 (RSCKYVLNTLMQTFQIKRLAHAVKEGTLDNLITELLLWLLD) is one HEAT 14 repeat. The interval 1755–1776 (MGQTHWGDAGSNNPNPSTHSTD) is disordered. The segment covering 1764 to 1776 (GSNNPNPSTHSTD) has biased composition (polar residues).

Belongs to the TOG/XMAP215 family.

It localises to the cytoplasm. It is found in the cytoskeleton. In terms of biological role, microtubule-associated protein that is essential for cortical microtubules organization and function. In Oryza sativa subsp. japonica (Rice), this protein is Protein MOR1 (MOR1).